Here is a 482-residue protein sequence, read N- to C-terminus: Rho GTPase-activating protein 15 (482 aa).

A phosphoserine mark is found at serine 51, serine 111, serine 205, serine 208, and serine 250. The 112-residue stretch at 87–198 (MVEKEGYLQK…WFHAIKNAID (112 aa)) folds into the PH domain. The Rho-GAP domain occupies 288 to 477 (SHLHTVCERE…FMLTEYDKIF (190 aa)).

It is found in the cytoplasm. Its subcellular location is the membrane. In terms of biological role, GTPase activator for the Rho-type GTPases by converting them to an inactive GDP-bound state. Has activity toward RAC1. Overexpression results in an increase in actin stress fibers and cell contraction. This Rattus norvegicus (Rat) protein is Rho GTPase-activating protein 15 (Arhgap15).